The primary structure comprises 493 residues: uncharacterized protein (493 aa).

Position 8–37 (8–37) interacts with FAD; that stretch reads DFLVVGGGTCGCVVAARLSEDPSATVMLLE. The active-site Proton acceptor is histidine 429.

Belongs to the GMC oxidoreductase family. Requires FAD as cofactor.

This is an uncharacterized protein from Rhodococcus erythropolis (Arthrobacter picolinophilus).